The following is a 134-amino-acid chain: Small ribosomal subunit protein uS8 (134 aa).

Belongs to the universal ribosomal protein uS8 family. In terms of assembly, part of the 30S ribosomal subunit. Contacts proteins S5 and S12.

Functionally, one of the primary rRNA binding proteins, it binds directly to 16S rRNA central domain where it helps coordinate assembly of the platform of the 30S subunit. The chain is Small ribosomal subunit protein uS8 from Kosmotoga olearia (strain ATCC BAA-1733 / DSM 21960 / TBF 19.5.1).